A 215-amino-acid polypeptide reads, in one-letter code: Octanoyltransferase (215 aa).

The BPL/LPL catalytic domain occupies 31–206 (TSAEDEIWLV…QLVKHLDYAE (176 aa)). Substrate is bound by residues 70 to 77 (RGGQVTYH), 137 to 139 (SLG), and 150 to 152 (GLA). Cysteine 168 functions as the Acyl-thioester intermediate in the catalytic mechanism.

The protein belongs to the LipB family.

It is found in the cytoplasm. The enzyme catalyses octanoyl-[ACP] + L-lysyl-[protein] = N(6)-octanoyl-L-lysyl-[protein] + holo-[ACP] + H(+). It participates in protein modification; protein lipoylation via endogenous pathway; protein N(6)-(lipoyl)lysine from octanoyl-[acyl-carrier-protein]: step 1/2. Its function is as follows. Catalyzes the transfer of endogenously produced octanoic acid from octanoyl-acyl-carrier-protein onto the lipoyl domains of lipoate-dependent enzymes. Lipoyl-ACP can also act as a substrate although octanoyl-ACP is likely to be the physiological substrate. This Pseudomonas fluorescens (strain SBW25) protein is Octanoyltransferase.